The chain runs to 155 residues: Interleukin-2 (155 aa).

The first 20 residues, Met1 to Gly20, serve as a signal peptide directing secretion. Thr23 carries an O-linked (GalNAc...) threonine glycan. A disulfide bond links Cys79 and Cys127.

It belongs to the IL-2 family.

It localises to the secreted. Its function is as follows. Cytokine produced by activated CD4-positive helper T-cells and to a lesser extend activated CD8-positive T-cells and natural killer (NK) cells that plays pivotal roles in the immune response and tolerance. Binds to a receptor complex composed of either the high-affinity trimeric IL-2R (IL2RA/CD25, IL2RB/CD122 and IL2RG/CD132) or the low-affinity dimeric IL-2R (IL2RB and IL2RG). Interaction with the receptor leads to oligomerization and conformation changes in the IL-2R subunits resulting in downstream signaling starting with phosphorylation of JAK1 and JAK3. In turn, JAK1 and JAK3 phosphorylate the receptor to form a docking site leading to the phosphorylation of several substrates including STAT5. This process leads to activation of several pathways including STAT, phosphoinositide-3-kinase/PI3K and mitogen-activated protein kinase/MAPK pathways. Functions as a T-cell growth factor and can increase NK-cell cytolytic activity as well. Promotes strong proliferation of activated B-cells and subsequently immunoglobulin production. Plays a pivotal role in regulating the adaptive immune system by controlling the survival and proliferation of regulatory T-cells, which are required for the maintenance of immune tolerance. Moreover, participates in the differentiation and homeostasis of effector T-cell subsets, including Th1, Th2, Th17 as well as memory CD8-positive T-cells. The chain is Interleukin-2 (IL2) from Moschus berezovskii (Chinese forest musk deer).